The chain runs to 130 residues: Probable 15 kDa heat shock protein (130 aa).

The 110-residue stretch at E21 to E130 folds into the sHSP domain.

This sequence belongs to the small heat shock protein (HSP20) family.

This is Probable 15 kDa heat shock protein (hsp15) from Leptospira interrogans serogroup Icterohaemorrhagiae serovar Lai (strain 56601).